We begin with the raw amino-acid sequence, 452 residues long: MSTTTIASNAVNGNHYEQLHQGRTKMYKSKVDVVLGAQWGDEGKGKVVDMLASEVDIVCRCQGGNNAGHTVVANGTEFDFHLLPSGVVNEKCISVIGNGVVIHLPSLFDEVLKNEAKGLIHLENRLIISDRAHLVFDFHQHVDGMQEAEKGGKSLGTTKKGIGPAYSSKATRNGIRVGELLGEFNLFSEKFKSIVNTHLRLFPSIKVDIDAELVRYKDYAEKIRPYVKDTICFLHTALRNGKTILVEGANAAMLDIDFGTYPYVTSSNCSIGGVLTGLGLPPQTIGEVIGVVKAYTTRVGDGPFPTEQLNEIGDLLQTRGFEVGVTTKRKRRCGWLDIPLLQYTSLVNGYTCICITKLDILDTLAEIKVGVSYRRSNGDKLDHFPGTISELGGIEVEYAILPGWQTSTEHVRNFKELPENAQSYVRFLESHLSVPVRWVGVGKGRESIINVH.

Residues 40-46 and 68-70 each bind GTP; these read GDEGKGK and GHT. The Proton acceptor role is filled by Asp-41. Mg(2+)-binding residues include Asp-41 and Gly-68. IMP-binding positions include 41–44, 66–69, Thr-158, Arg-172, Asn-250, Thr-265, and Arg-329; these read DEGK and NAGH. His-69 functions as the Proton donor in the catalytic mechanism. Position 325 to 331 (325 to 331) interacts with substrate; the sequence is VTTKRKR. GTP is bound by residues Arg-331, 357 to 359, and 440 to 442; these read KLD and GVG.

It belongs to the adenylosuccinate synthetase family. In terms of assembly, homodimer. Mg(2+) is required as a cofactor.

The protein resides in the cytoplasm. The catalysed reaction is IMP + L-aspartate + GTP = N(6)-(1,2-dicarboxyethyl)-AMP + GDP + phosphate + 2 H(+). It functions in the pathway purine metabolism; AMP biosynthesis via de novo pathway; AMP from IMP: step 1/2. Functionally, plays an important role in the de novo pathway and in the salvage pathway of purine nucleotide biosynthesis. Catalyzes the first committed step in the biosynthesis of AMP from IMP. The sequence is that of Adenylosuccinate synthetase from Drosophila grimshawi (Hawaiian fruit fly).